The sequence spans 186 residues: Translation initiation factor IF-3 (186 aa).

A disordered region spans residues 1-20 (MINRSAGKDRDRSRSGDKEL).

This sequence belongs to the IF-3 family. In terms of assembly, monomer.

It is found in the cytoplasm. IF-3 binds to the 30S ribosomal subunit and shifts the equilibrium between 70S ribosomes and their 50S and 30S subunits in favor of the free subunits, thus enhancing the availability of 30S subunits on which protein synthesis initiation begins. The sequence is that of Translation initiation factor IF-3 from Borrelia hermsii (strain HS1 / DAH).